The following is a 104-amino-acid chain: Type IV secretion system protein PtlB homolog (104 aa).

A helical membrane pass occupies residues 30 to 50 (IALLGIWFSIAFLALFPVALL).

The protein belongs to the virB3 family.

The protein resides in the cell membrane. This is Type IV secretion system protein PtlB homolog (ptlB) from Bordetella parapertussis (strain 12822 / ATCC BAA-587 / NCTC 13253).